Reading from the N-terminus, the 350-residue chain is Biotin synthase (350 aa).

The 228-residue stretch at 41–268 (NEVQISRLLS…KSRVRLSAGR (228 aa)) folds into the Radical SAM core domain. Residues C56, C60, and C63 each coordinate [4Fe-4S] cluster. The [2Fe-2S] cluster site is built by C100, C131, C191, and R263.

It belongs to the radical SAM superfamily. Biotin synthase family. As to quaternary structure, homodimer. It depends on [4Fe-4S] cluster as a cofactor. [2Fe-2S] cluster is required as a cofactor.

The catalysed reaction is (4R,5S)-dethiobiotin + (sulfur carrier)-SH + 2 reduced [2Fe-2S]-[ferredoxin] + 2 S-adenosyl-L-methionine = (sulfur carrier)-H + biotin + 2 5'-deoxyadenosine + 2 L-methionine + 2 oxidized [2Fe-2S]-[ferredoxin]. The protein operates within cofactor biosynthesis; biotin biosynthesis; biotin from 7,8-diaminononanoate: step 2/2. Functionally, catalyzes the conversion of dethiobiotin (DTB) to biotin by the insertion of a sulfur atom into dethiobiotin via a radical-based mechanism. In Shewanella halifaxensis (strain HAW-EB4), this protein is Biotin synthase.